The sequence spans 263 residues: Indole-3-glycerol phosphate synthase (263 aa).

The protein belongs to the TrpC family.

It catalyses the reaction 1-(2-carboxyphenylamino)-1-deoxy-D-ribulose 5-phosphate + H(+) = (1S,2R)-1-C-(indol-3-yl)glycerol 3-phosphate + CO2 + H2O. It participates in amino-acid biosynthesis; L-tryptophan biosynthesis; L-tryptophan from chorismate: step 4/5. The protein is Indole-3-glycerol phosphate synthase of Rhodospirillum rubrum (strain ATCC 11170 / ATH 1.1.1 / DSM 467 / LMG 4362 / NCIMB 8255 / S1).